The sequence spans 272 residues: Phosphoribosylformylglycinamidine synthase subunit PurQ (272 aa).

The region spanning 8–243 is the Glutamine amidotransferase type-1 domain; the sequence is VLVMSGYGIN…SEPEYQLKKE (236 aa). Residue Cys-98 is the Nucleophile of the active site. Catalysis depends on residues His-225, Glu-227, and Glu-235.

In terms of assembly, part of the FGAM synthase complex composed of 1 PurL, 1 PurQ and 2 PurS subunits.

Its subcellular location is the cytoplasm. The enzyme catalyses N(2)-formyl-N(1)-(5-phospho-beta-D-ribosyl)glycinamide + L-glutamine + ATP + H2O = 2-formamido-N(1)-(5-O-phospho-beta-D-ribosyl)acetamidine + L-glutamate + ADP + phosphate + H(+). It carries out the reaction L-glutamine + H2O = L-glutamate + NH4(+). The protein operates within purine metabolism; IMP biosynthesis via de novo pathway; 5-amino-1-(5-phospho-D-ribosyl)imidazole from N(2)-formyl-N(1)-(5-phospho-D-ribosyl)glycinamide: step 1/2. Part of the phosphoribosylformylglycinamidine synthase complex involved in the purines biosynthetic pathway. Catalyzes the ATP-dependent conversion of formylglycinamide ribonucleotide (FGAR) and glutamine to yield formylglycinamidine ribonucleotide (FGAM) and glutamate. The FGAM synthase complex is composed of three subunits. PurQ produces an ammonia molecule by converting glutamine to glutamate. PurL transfers the ammonia molecule to FGAR to form FGAM in an ATP-dependent manner. PurS interacts with PurQ and PurL and is thought to assist in the transfer of the ammonia molecule from PurQ to PurL. This Methanococcus maripaludis (strain C7 / ATCC BAA-1331) protein is Phosphoribosylformylglycinamidine synthase subunit PurQ.